Consider the following 905-residue polypeptide: Patched domain-containing protein 3 (905 aa).

Positions 1-67 (MISSKVAPGE…PVGQEAPPPR (67 aa)) are disordered. The helical transmembrane segment at 94-114 (WLFLLGPVLLTASLGTGLIFL) threads the bilayer. Residues Asn-146, Asn-199, Asn-229, and Asn-233 are each glycosylated (N-linked (GlcNAc...) asparagine). The next 6 helical transmembrane spans lie at 337–357 (TVIP…VVSC), 369–389 (VAVF…GLML), 391–411 (IGVP…GVGV), 441–461 (VAVS…TGIT), 475–495 (GTTL…IMAL), and 558–578 (FIVV…CFQV). In terms of domain architecture, SSD spans 338 to 495 (VIPLFHLAYI…ITCFGAIMAL (158 aa)). Asn-647, Asn-661, and Asn-692 each carry an N-linked (GlcNAc...) asparagine glycan. 5 helical membrane passes run 759 to 779 (VMIA…HPVC), 781 to 801 (LWVT…MAFW), 813 to 833 (LVIC…AFVS), 849 to 869 (LLGY…CVLA), and 882 to 902 (IMFL…PVFL).

This sequence belongs to the patched family. As to expression, expressed in germ cells of the testis (at protein level).

The protein localises to the cell projection. It localises to the cilium. The protein resides in the flagellum membrane. It is found in the endoplasmic reticulum membrane. In terms of biological role, may play a role in sperm development or sperm function. However, does not appear to have an essential role in spermatogenesis or male fertility. This is Patched domain-containing protein 3 from Rattus norvegicus (Rat).